The following is a 683-amino-acid chain: ATP-dependent zinc metalloprotease FtsH (683 aa).

A disordered region spans residues 1 to 43 (MEDKNIKDDEILDDQNDNQEDVQNQDEEKEIKPKKPKKKVYIS). Residues 1-70 (MEDKNIKDDE…KNNNISFRVK (70 aa)) lie on the Cytoplasmic side of the membrane. Residues 10-28 (EILDDQNDNQEDVQNQDEE) are compositionally biased toward acidic residues. A helical membrane pass occupies residues 71–91 (PPIFFFLILILMSTLFYFYGN). Over 92–174 (KTALFQEKRE…IVVLGTPVSS (83 aa)) the chain is Periplasmic. Residues 175-195 (IITRAIFSFAPLFMLLFFFYF) traverse the membrane as a helical segment. Topologically, residues 196-683 (INKKMMGSSG…LDDEQLEKYY (488 aa)) are cytoplasmic. 270–277 (GEPGTGKT) provides a ligand contact to ATP. Residue His-494 coordinates Zn(2+). Glu-495 is a catalytic residue. Zn(2+) contacts are provided by His-498 and Asp-569.

This sequence in the central section; belongs to the AAA ATPase family. In the C-terminal section; belongs to the peptidase M41 family. As to quaternary structure, homohexamer. The cofactor is Zn(2+).

It localises to the cell inner membrane. Acts as a processive, ATP-dependent zinc metallopeptidase for both cytoplasmic and membrane proteins. Plays a role in the quality control of integral membrane proteins. This chain is ATP-dependent zinc metalloprotease FtsH, found in Streptobacillus moniliformis (strain ATCC 14647 / DSM 12112 / NCTC 10651 / 9901).